The primary structure comprises 556 residues: CDP-diacylglycerol--glycerol-3-phosphate 3-phosphatidyltransferase, mitochondrial (556 aa).

Residues 1 to 28 (MAVAAAAAAGPVFWRRLLGLLPGRPGLA) constitute a mitochondrion transit peptide. Serine 49 bears the Phosphoserine mark. 124–131 (ASLYLGTG) contributes to the ATP binding site. PLD phosphodiesterase domains lie at 215 to 241 (TIGL…SDSY) and 460 to 493 (RGWT…GYRS). Catalysis depends on residues histidine 220, lysine 222, and aspartate 227.

It belongs to the CDP-alcohol phosphatidyltransferase class-II family.

The protein localises to the mitochondrion. The catalysed reaction is a CDP-1,2-diacyl-sn-glycerol + sn-glycerol 3-phosphate = a 1,2-diacyl-sn-glycero-3-phospho-(1'-sn-glycero-3'-phosphate) + CMP + H(+). It participates in phospholipid metabolism; phosphatidylglycerol biosynthesis; phosphatidylglycerol from CDP-diacylglycerol: step 1/2. Its activity is regulated as follows. Activated by calcium and magnesium and inhibited by other bivalent cations. Functionally, functions in the biosynthesis of the anionic phospholipids phosphatidylglycerol and cardiolipin. In Homo sapiens (Human), this protein is CDP-diacylglycerol--glycerol-3-phosphate 3-phosphatidyltransferase, mitochondrial (PGS1).